Consider the following 684-residue polypeptide: DNA-directed RNA polymerase subunit beta' (684 aa).

Zn(2+)-binding residues include Cys69, Cys71, Cys87, and Cys90. Asp489, Asp491, and Asp493 together coordinate Mg(2+).

This sequence belongs to the RNA polymerase beta' chain family. RpoC1 subfamily. As to quaternary structure, in plastids the minimal PEP RNA polymerase catalytic core is composed of four subunits: alpha, beta, beta', and beta''. When a (nuclear-encoded) sigma factor is associated with the core the holoenzyme is formed, which can initiate transcription. Mg(2+) is required as a cofactor. The cofactor is Zn(2+).

It is found in the plastid. It localises to the chloroplast. The catalysed reaction is RNA(n) + a ribonucleoside 5'-triphosphate = RNA(n+1) + diphosphate. In terms of biological role, DNA-dependent RNA polymerase catalyzes the transcription of DNA into RNA using the four ribonucleoside triphosphates as substrates. The chain is DNA-directed RNA polymerase subunit beta' from Morus indica (Mulberry).